The sequence spans 543 residues: CTP synthase (543 aa).

The segment at 1–265 (MTKFIFVTGG…DRLVTDRFRI (265 aa)) is amidoligase domain. CTP is bound at residue S13. Residue S13 participates in UTP binding. ATP-binding positions include 14 to 19 (SLGKGI) and D71. Positions 71 and 139 each coordinate Mg(2+). Residues 146–148 (DIE), 186–191 (KTKPTQ), and K222 contribute to the CTP site. UTP contacts are provided by residues 186-191 (KTKPTQ) and K222. In terms of domain architecture, Glutamine amidotransferase type-1 spans 290-541 (EIAMVGKYVD…VEAASQHKQT (252 aa)). G351 is a binding site for L-glutamine. The active-site Nucleophile; for glutamine hydrolysis is C378. L-glutamine contacts are provided by residues 379-382 (LGMQ), E402, and R469. Active-site residues include H514 and E516.

The protein belongs to the CTP synthase family. Homotetramer.

The catalysed reaction is UTP + L-glutamine + ATP + H2O = CTP + L-glutamate + ADP + phosphate + 2 H(+). It carries out the reaction L-glutamine + H2O = L-glutamate + NH4(+). It catalyses the reaction UTP + NH4(+) + ATP = CTP + ADP + phosphate + 2 H(+). Its pathway is pyrimidine metabolism; CTP biosynthesis via de novo pathway; CTP from UDP: step 2/2. Its activity is regulated as follows. Allosterically activated by GTP, when glutamine is the substrate; GTP has no effect on the reaction when ammonia is the substrate. The allosteric effector GTP functions by stabilizing the protein conformation that binds the tetrahedral intermediate(s) formed during glutamine hydrolysis. Inhibited by the product CTP, via allosteric rather than competitive inhibition. Functionally, catalyzes the ATP-dependent amination of UTP to CTP with either L-glutamine or ammonia as the source of nitrogen. Regulates intracellular CTP levels through interactions with the four ribonucleotide triphosphates. This Hydrogenovibrio crunogenus (strain DSM 25203 / XCL-2) (Thiomicrospira crunogena) protein is CTP synthase.